We begin with the raw amino-acid sequence, 251 residues long: Triosephosphate isomerase (251 aa).

Position 9 to 11 (9 to 11 (NWK)) interacts with substrate. His95 serves as the catalytic Electrophile. Catalysis depends on Glu167, which acts as the Proton acceptor. Substrate contacts are provided by residues Gly173, Ser213, and 234–235 (GG). Residue Ser213 is modified to Phosphoserine.

This sequence belongs to the triosephosphate isomerase family. In terms of assembly, homodimer.

The protein localises to the cytoplasm. The enzyme catalyses D-glyceraldehyde 3-phosphate = dihydroxyacetone phosphate. The protein operates within carbohydrate biosynthesis; gluconeogenesis. It participates in carbohydrate degradation; glycolysis; D-glyceraldehyde 3-phosphate from glycerone phosphate: step 1/1. Functionally, involved in the gluconeogenesis. Catalyzes stereospecifically the conversion of dihydroxyacetone phosphate (DHAP) to D-glyceraldehyde-3-phosphate (G3P). The chain is Triosephosphate isomerase from Bacillus mycoides (strain KBAB4) (Bacillus weihenstephanensis).